The following is a 300-amino-acid chain: MSYRELIAELAREHAEEFSDALLELGALSVSVEDADADTPDEQPLFGEPGLTPDRTAWQRSRVIALLAPEHEPAVLLTAAANEIGLPAAPSFTVREVEDQDWVRLTQSQFDPIKIGERIWVVPSWHDAPDPEALVLELDPGLAFGTGSHPTTRLCMEWLEQSVQPEQSVLDYGCGSGILAILAKKCGANPVYGIDIDPQAVESARHNSERNRAEVIYGLPDECPTGEFDIVVANILSNPLKLMASMLTSKVKPGGKIALSGILARQADEVAQVYSRWIDISVWREHEGWVCLSGTRRESH.

S-adenosyl-L-methionine is bound by residues T152, G173, D195, and N234.

This sequence belongs to the methyltransferase superfamily. PrmA family.

The protein localises to the cytoplasm. The enzyme catalyses L-lysyl-[protein] + 3 S-adenosyl-L-methionine = N(6),N(6),N(6)-trimethyl-L-lysyl-[protein] + 3 S-adenosyl-L-homocysteine + 3 H(+). Methylates ribosomal protein L11. The chain is Ribosomal protein L11 methyltransferase from Paraburkholderia phytofirmans (strain DSM 17436 / LMG 22146 / PsJN) (Burkholderia phytofirmans).